The chain runs to 448 residues: Na(+)-translocating NADH-quinone reductase subunit A (448 aa).

It belongs to the NqrA family. Composed of six subunits; NqrA, NqrB, NqrC, NqrD, NqrE and NqrF.

The enzyme catalyses a ubiquinone + n Na(+)(in) + NADH + H(+) = a ubiquinol + n Na(+)(out) + NAD(+). Functionally, NQR complex catalyzes the reduction of ubiquinone-1 to ubiquinol by two successive reactions, coupled with the transport of Na(+) ions from the cytoplasm to the periplasm. NqrA to NqrE are probably involved in the second step, the conversion of ubisemiquinone to ubiquinol. The sequence is that of Na(+)-translocating NADH-quinone reductase subunit A from Glaesserella parasuis serovar 5 (strain SH0165) (Haemophilus parasuis).